We begin with the raw amino-acid sequence, 486 residues long: NADH dehydrogenase [ubiquinone] flavoprotein 1, mitochondrial (486 aa).

Residues 1–30 (MAPVRGILGLQRAVSIWKESNRLTPALRSF) constitute a mitochondrion transit peptide. A compositionally biased stretch (low complexity) spans 31–40 (STQAASTSTT). A disordered region spans residues 31 to 57 (STQAASTSTTPQPPPPPPPPEKTHFGG). Pro residues predominate over residues 41–50 (PQPPPPPPPP). Residue 110–119 (GRGGAGFPSG) participates in NADH binding. Position 222–270 (222–270 (FGAGAYICGEETALLESLEGKQGKPRLKPPFPANAGLYGCPTTVTNVET)) interacts with FMN. [4Fe-4S] cluster is bound by residues C402, C405, C408, and C448.

It belongs to the complex I 51 kDa subunit family. As to quaternary structure, complex I is composed of at least 49 different subunits. This is a component of the flavoprotein-sulfur (FP) fragment of the enzyme. Requires FMN as cofactor. It depends on [4Fe-4S] cluster as a cofactor.

It is found in the mitochondrion inner membrane. The enzyme catalyses a ubiquinone + NADH + 5 H(+)(in) = a ubiquinol + NAD(+) + 4 H(+)(out). Functionally, core subunit of the mitochondrial membrane respiratory chain NADH dehydrogenase (Complex I) that is believed to belong to the minimal assembly required for catalysis. Complex I functions in the transfer of electrons from NADH to the respiratory chain. The immediate electron acceptor for the enzyme is believed to be ubiquinone. This chain is NADH dehydrogenase [ubiquinone] flavoprotein 1, mitochondrial, found in Arabidopsis thaliana (Mouse-ear cress).